A 202-amino-acid polypeptide reads, in one-letter code: Thymidylate kinase (202 aa).

ATP is bound at residue G13–S20.

It belongs to the thymidylate kinase family.

It carries out the reaction dTMP + ATP = dTDP + ADP. Its function is as follows. Phosphorylation of dTMP to form dTDP in both de novo and salvage pathways of dTTP synthesis. The polypeptide is Thymidylate kinase (Desulfotalea psychrophila (strain LSv54 / DSM 12343)).